The primary structure comprises 939 residues: Nonsense-mediated mRNA decay factor SMG8 (939 aa).

Disordered stretches follow at residues 561–600 and 617–645; these read KICT…QLSP and LNES…ADTE. Over residues 567–587 the composition is skewed to acidic residues; the sequence is GEDENEDGETEEADEDTEEKE. Low complexity predominate over residues 617 to 629; that stretch reads LNESQESSEQLSG.

Belongs to the SMG8 family.

In terms of biological role, involved in nonsense-mediated decay (NMD) of mRNAs containing premature stop codons. Probable component of kinase complex containing nonC and recruited to stalled ribosomes. This chain is Nonsense-mediated mRNA decay factor SMG8, found in Drosophila ananassae (Fruit fly).